A 121-amino-acid polypeptide reads, in one-letter code: Large ribosomal subunit protein bL12 (121 aa).

The protein belongs to the bacterial ribosomal protein bL12 family. Homodimer. Part of the ribosomal stalk of the 50S ribosomal subunit. Forms a multimeric L10(L12)X complex, where L10 forms an elongated spine to which 2 to 4 L12 dimers bind in a sequential fashion. Binds GTP-bound translation factors.

Functionally, forms part of the ribosomal stalk which helps the ribosome interact with GTP-bound translation factors. Is thus essential for accurate translation. This chain is Large ribosomal subunit protein bL12, found in Enterobacter sp. (strain 638).